A 634-amino-acid polypeptide reads, in one-letter code: Probable beta-glucosidase C (634 aa).

The signal sequence occupies residues methionine 1–alanine 19. Residues asparagine 90, asparagine 112, asparagine 219, and asparagine 270 are each glycosylated (N-linked (GlcNAc...) asparagine). Aspartate 337 is an active-site residue. Residues asparagine 360, asparagine 476, asparagine 484, and asparagine 524 are each glycosylated (N-linked (GlcNAc...) asparagine).

The protein belongs to the glycosyl hydrolase 3 family.

The protein resides in the secreted. It catalyses the reaction Hydrolysis of terminal, non-reducing beta-D-glucosyl residues with release of beta-D-glucose.. It functions in the pathway glycan metabolism; cellulose degradation. In terms of biological role, beta-glucosidases are one of a number of cellulolytic enzymes involved in the degradation of cellulosic biomass. Catalyzes the last step releasing glucose from the inhibitory cellobiose. The chain is Probable beta-glucosidase C (bglC) from Aspergillus flavus (strain ATCC 200026 / FGSC A1120 / IAM 13836 / NRRL 3357 / JCM 12722 / SRRC 167).